Reading from the N-terminus, the 408-residue chain is Peptidase T (408 aa).

The tract at residues Met1–Ser28 is disordered. Residues Arg11 to Ser28 are compositionally biased toward polar residues. His78 lines the Zn(2+) pocket. Asp80 is an active-site residue. Residue Asp140 coordinates Zn(2+). The Proton acceptor role is filled by Glu174. 3 residues coordinate Zn(2+): Glu175, Asp197, and His379.

This sequence belongs to the peptidase M20B family. Zn(2+) serves as cofactor.

It is found in the cytoplasm. It catalyses the reaction Release of the N-terminal residue from a tripeptide.. Functionally, cleaves the N-terminal amino acid of tripeptides. This is Peptidase T from Staphylococcus aureus (strain USA300 / TCH1516).